The primary structure comprises 452 residues: Glutathione gamma-glutamylcysteinyltransferase 2 (452 aa).

Residues Met1–Arg220 enclose the Peptidase C83 domain. Positions Glu287–Lys315 form a coiled coil.

This sequence belongs to the phytochelatin synthase family. In terms of tissue distribution, expressed in shoots, roots, leaves, stems and flowers.

The enzyme catalyses [Glu(-Cys)](n)-Gly + glutathione + H(+) = [Glu(-Cys)](n+1)-Gly + glycine. Requires cadmium for activity. Also activated in heterologous system by AsO(4)(3-) ions, but not by Cu(2+), Zn(2+), Mn(2+) or Ni(2+) ions. In terms of biological role, involved in the synthesis of phytochelatins (PC) and homophytochelatins (hPC), the heavy-metal-binding peptides of plants. The chain is Glutathione gamma-glutamylcysteinyltransferase 2 (PCS2) from Arabidopsis thaliana (Mouse-ear cress).